A 208-amino-acid polypeptide reads, in one-letter code: Uracil phosphoribosyltransferase (208 aa).

5-phospho-alpha-D-ribose 1-diphosphate is bound by residues Arg78, Arg103, and 130–138; that span reads DPMLATGGS. Residues Ile193 and 198-200 each bind uracil; that span reads GDA. Asp199 is a 5-phospho-alpha-D-ribose 1-diphosphate binding site.

The protein belongs to the UPRTase family. The cofactor is Mg(2+).

It carries out the reaction UMP + diphosphate = 5-phospho-alpha-D-ribose 1-diphosphate + uracil. It functions in the pathway pyrimidine metabolism; UMP biosynthesis via salvage pathway; UMP from uracil: step 1/1. Allosterically activated by GTP. Catalyzes the conversion of uracil and 5-phospho-alpha-D-ribose 1-diphosphate (PRPP) to UMP and diphosphate. The polypeptide is Uracil phosphoribosyltransferase (Actinobacillus pleuropneumoniae serotype 5b (strain L20)).